A 216-amino-acid chain; its full sequence is MSSLVTPQHAEELSTGARQLGVELTAEQHEKLLGYLALLIKWNKAYNLTAVRDPDEMVSRHLLDSLSVMSFIHNDRDNWLDVGSGGGMPGIPLAILHPHKRVTVLDANGKKTRFLTQVKMELKLDNLTVIHSRVEAFQPAQPFDGIISRAFSSMENFTNWTRHLGDTGTQWLAMKGLHPADELVALPADFTVESEQALTVPGCQGQRHLLILRRKA.

S-adenosyl-L-methionine contacts are provided by residues Gly83, Met88, 134–135 (VE), and Arg149.

This sequence belongs to the methyltransferase superfamily. RNA methyltransferase RsmG family.

The protein resides in the cytoplasm. The enzyme catalyses guanosine(527) in 16S rRNA + S-adenosyl-L-methionine = N(7)-methylguanosine(527) in 16S rRNA + S-adenosyl-L-homocysteine. Specifically methylates the N7 position of guanine in position 527 of 16S rRNA. In Pseudomonas putida (strain ATCC 700007 / DSM 6899 / JCM 31910 / BCRC 17059 / LMG 24140 / F1), this protein is Ribosomal RNA small subunit methyltransferase G.